A 102-amino-acid polypeptide reads, in one-letter code: Methane monooxygenase component D (102 aa).

As to quaternary structure, the soluble methane monooxygenase (sMMO) consists of four components A/MMOH (composed of alpha/MmoX, beta/MmoY and gamma/MmoZ), B/MMOB (MmoB), C/MMOR (MmoC) and D/MMOD (MmoD).

The chain is Methane monooxygenase component D (mmoD) from Methylosinus trichosporium.